Consider the following 504-residue polypeptide: Cytoplasmic dynein 1 light intermediate chain 1 (504 aa).

Residue 35 to 42 (GDPTSGKS) coordinates ATP. Composition is skewed to low complexity over residues 167–189 (TTTAATTTTTTTSNNIENNTNKT), 392–425 (NSPSTPSPLSQSSNNNNSNNNINNTSTPSINTPL), and 437–446 (SSNNPVAASP). Disordered regions lie at residues 167–195 (TTTAATTTTTTTSNNIENNTNKTSPTTDK), 383–446 (LDND…AASP), and 464–504 (DKTS…QQKK). A compositionally biased stretch (basic and acidic residues) spans 464–473 (DKTSSRKDLK). Over residues 475 to 487 (SLASPPTTSVSSN) the composition is skewed to polar residues. Over residues 488–504 (AREDAKKELDKLKQQKK) the composition is skewed to basic and acidic residues.

It belongs to the dynein light intermediate chain family. In terms of assembly, homodimer. The cytoplasmic dynein 1 complex consists of two catalytic heavy chains (HCs) and a number of non-catalytic subunits presented by intermediate chains (ICs), light intermediate chains (LICs) and light chains (LCs).

The protein resides in the cytoplasm. It localises to the cytoskeleton. Its function is as follows. Acts as one of several non-catalytic accessory components of the cytoplasmic dynein 1 complex that are thought to be involved in linking dynein to cargos and to adapter proteins that regulate dynein function. Cytoplasmic dynein 1 acts as a motor for the intracellular retrograde motility of vesicles and organelles along microtubules. May play a role in binding dynein to membranous organelles or chromosomes. The polypeptide is Cytoplasmic dynein 1 light intermediate chain 1 (dync1li1) (Dictyostelium discoideum (Social amoeba)).